Reading from the N-terminus, the 645-residue chain is tRNA 5-methylaminomethyl-2-thiouridine biosynthesis bifunctional protein MnmC (645 aa).

Residues 1 to 230 (MPMSEPIDWL…KRHNLHAVFD (230 aa)) are tRNA (mnm(5)s(2)U34)-methyltransferase. An FAD-dependent cmnm(5)s(2)U34 oxidoreductase region spans residues 254–645 (LGAGIAGAAA…LASERLGRRR (392 aa)).

The protein in the N-terminal section; belongs to the methyltransferase superfamily. tRNA (mnm(5)s(2)U34)-methyltransferase family. This sequence in the C-terminal section; belongs to the DAO family. FAD serves as cofactor.

The protein resides in the cytoplasm. It carries out the reaction 5-aminomethyl-2-thiouridine(34) in tRNA + S-adenosyl-L-methionine = 5-methylaminomethyl-2-thiouridine(34) in tRNA + S-adenosyl-L-homocysteine + H(+). Its function is as follows. Catalyzes the last two steps in the biosynthesis of 5-methylaminomethyl-2-thiouridine (mnm(5)s(2)U) at the wobble position (U34) in tRNA. Catalyzes the FAD-dependent demodification of cmnm(5)s(2)U34 to nm(5)s(2)U34, followed by the transfer of a methyl group from S-adenosyl-L-methionine to nm(5)s(2)U34, to form mnm(5)s(2)U34. This is tRNA 5-methylaminomethyl-2-thiouridine biosynthesis bifunctional protein MnmC from Delftia acidovorans (strain DSM 14801 / SPH-1).